The sequence spans 668 residues: WD repeat-containing protein 48 homolog (668 aa).

WD repeat units lie at residues 26–65 (QHRN…SEKY), 71–110 (HHND…CMST), 113–152 (THRD…ALTA), 164–203 (GSKD…RRMK), 206–245 (GHTE…CVQT), 248–287 (VHKE…NKTL), 290–329 (EEQA…RCTL), and 350–389 (KGGA…KKEQ). The interval 592–616 (ETTPSGGNANNSLQNSQSDANSEGS) is disordered.

This sequence belongs to the WD repeat WDR48 family. As to quaternary structure, catalytic component of the Usp12-46 deubiquitylase complex consisting of Usp12-46, Wdr20 and Uaf1; regulatory subunit that, together wtih Wdr20, stabilizes Usp12-46. The Usp12-46 deubiquitylase complex associates with arr/arrow; the interaction leads to deubiquitination and stabilization of arr/arrow.

Functionally, regulatory component of the Usp12-46 deubiquitylase complex. activates deubiquitination by increasing the catalytic turnover without increasing the affinity of deubiquitinating enzymes for the substrate. The complex deubiquitylates the wg/wingless-signaling receptor arr/arrow, which stabilizes the receptor and increases its concentration at the cell surface; this enhances the sensitivity of cells to wg/wingless-signal stimulation. This increases the amplitude and spatial range of the signaling response to the wg/wingless morphogen gradient, facilitating the precise concentration-dependent regulation of its target genes. Together with Wdr20 and Usp12-46 required for wg/wingless-mediated signaling in the wing imaginal disc and for wg/wingless-dependent regulation of intestinal stem cell proliferation. In Drosophila melanogaster (Fruit fly), this protein is WD repeat-containing protein 48 homolog.